The primary structure comprises 257 residues: 3-methyl-2-oxobutanoate hydroxymethyltransferase (257 aa).

Positions 42 and 86 each coordinate Mg(2+). Residues 42-43, Asp-86, and Lys-116 each bind 3-methyl-2-oxobutanoate; that span reads DS. Mg(2+) is bound at residue Glu-118. Glu-185 (proton acceptor) is an active-site residue.

The protein belongs to the PanB family. In terms of assembly, homodecamer; pentamer of dimers. Mg(2+) is required as a cofactor.

Its subcellular location is the cytoplasm. It carries out the reaction 3-methyl-2-oxobutanoate + (6R)-5,10-methylene-5,6,7,8-tetrahydrofolate + H2O = 2-dehydropantoate + (6S)-5,6,7,8-tetrahydrofolate. It functions in the pathway cofactor biosynthesis; (R)-pantothenate biosynthesis; (R)-pantoate from 3-methyl-2-oxobutanoate: step 1/2. Catalyzes the reversible reaction in which hydroxymethyl group from 5,10-methylenetetrahydrofolate is transferred onto alpha-ketoisovalerate to form ketopantoate. The sequence is that of 3-methyl-2-oxobutanoate hydroxymethyltransferase from Prochlorococcus marinus (strain AS9601).